A 250-amino-acid chain; its full sequence is Transmembrane ascorbate-dependent reductase CYB561 (250 aa).

Met-1 carries the post-translational modification N-acetylmethionine. Residues 1–15 lie on the Cytoplasmic side of the membrane; the sequence is MEHSSASVPAALPYY. Residues 16–36 form a helical membrane-spanning segment; sequence VAFSQLLGLTVVAVTGAWLGL. In terms of domain architecture, Cytochrome b561 spans 18–219; it reads FSQLLGLTVV…FGVVVLYILA (202 aa). Residues 37 to 50 lie on the Vesicular side of the membrane; that stretch reads YRGGIAWESSLQFN. A helical membrane pass occupies residues 51-71; sequence VHPLCMVIGMIFLQGDALLVY. The heme b site is built by His-52, Arg-72, and Lys-79. Topologically, residues 72-83 are cytoplasmic; the sequence is RVFRREAKRTTK. 2 residues coordinate L-ascorbate: Lys-79 and Lys-83. A helical membrane pass occupies residues 84–104; sequence ILHGLLHVFAFIIALVGLVAV. Heme b contacts are provided by residues His-86, 115 to 118, and His-120; that span reads DLYS. Residues 105 to 123 lie on the Vesicular side of the membrane; sequence FDYHKKKGYADLYSLHSWC. A helical membrane pass occupies residues 124-144; that stretch reads GILVFVLYFVQWLVGFSFFLF. At 145–157 the chain is on the cytoplasmic side; sequence PGASFSLRSRYRP. Residue Arg-152 coordinates L-ascorbate. The chain crosses the membrane as a helical span at residues 158–178; sequence QHIFFGATIFLFSVGTALLGL. 2 residues coordinate heme b: His-159 and Glu-180. The Vesicular portion of the chain corresponds to 179–197; sequence KEALLFKLGSKYSTFEPEG. Residues 198–218 form a helical membrane-spanning segment; sequence VLANVLGLLLVCFGVVVLYIL. At 219 to 250 the chain is on the cytoplasmic side; that stretch reads AQADWKRPSQAEEQALSMDFKTLTEGDSPSPQ. Lys-224 contacts heme b. A phosphoserine mark is found at Ser-246 and Ser-248.

Requires heme b as cofactor. In terms of tissue distribution, abundantly distributed in a number of neuroendocrine tissues.

It is found in the cytoplasmic vesicle. The protein localises to the secretory vesicle. Its subcellular location is the chromaffin granule membrane. The enzyme catalyses monodehydro-L-ascorbate radical(out) + L-ascorbate(in) = monodehydro-L-ascorbate radical(in) + L-ascorbate(out). Transmembrane reductase that uses ascorbate as an electron donor in the cytoplasm and transfers electrons across membranes to reduce monodehydro-L-ascorbate radical in the lumen of secretory vesicles. It is therefore involved the regeneration and homeostasis within secretory vesicles of ascorbate which in turn provides reducing equivalents needed to support the activity of intravesicular enzymes. This Mus musculus (Mouse) protein is Transmembrane ascorbate-dependent reductase CYB561.